The primary structure comprises 330 residues: Induced myeloid leukemia cell differentiation protein Mcl-1 homolog (330 aa).

The PEST-like stretch occupies residues 85-155 (LAVPPEEMAA…PPEEEDDELY (71 aa)). A Phosphoserine modification is found at Ser-101. A Glycyl lysine isopeptide (Lys-Gly) (interchain with G-Cter in ubiquitin) cross-link involves residue Lys-116. The tract at residues 129–153 (EAAKSSGADGSLPSTPPPPEEEDDE) is disordered. Ser-139 carries the phosphoserine; by GSK3-alpha and GSK3-beta modification. Ser-142 bears the Phosphoserine mark. Thr-143 is modified (phosphothreonine; by MAPK). Residues Lys-174 and Lys-177 each participate in a glycyl lysine isopeptide (Lys-Gly) (interchain with G-Cter in ubiquitin) cross-link. The BH3 signature appears at 189–203 (ALETLRRVGDGVQRN). Residues 232–252 (HVFKDGVTNWGRIVTLISFGA) carry the BH1 motif. The short motif at 284–299 (DWLVKQRGWDGFVEFF) is the BH2 element. A helical transmembrane segment spans residues 307–329 (GIRNVLLAFAGVAGVGAGLAYLI).

It belongs to the Bcl-2 family. As to quaternary structure, interacts with HIF3A (via C-terminus domain). Interacts with BOK, BIK, BAX, BAK1, and TPT1. Interacts with unphosphorylated BAD. Interacts with BMF, BBC3 and PMAIP1. Interacts with BOP. Interacts with BCL2L11; may sequester BCL2L11 to prevent its pro-apoptotic activity. Interacts with GIMAP5 and HSPA8/HSC70; the interaction between HSPA8 and MCL1 is impaired in the absence of GIMAP5. Post-translationally, cleaved by CASP3 during apoptosis, yielding a pro-apoptotic C-terminal fragment. Rapidly degraded in the absence of phosphorylation in the PEST region. In terms of processing, phosphorylated on Ser-139, by GSK3, in response to IL3/interleukin-3 withdrawal. Phosphorylation at Ser-139 induces ubiquitination and proteasomal degradation, abrogating the anti-apoptotic activity. Treatment with taxol or okadaic acid induces phosphorylation on additional sites. Post-translationally, ubiquitinated. Ubiquitination is induced by phosphorylation at Ser-139. Deubiquitinated by USP20; leading to increased stability. In terms of tissue distribution, ubiquitous. Highly expressed in heart, spleen, lung, liver, skeletal muscle and kidney. Detected at lower levels in brain, ovary, oviduct and testis.

The protein resides in the membrane. It localises to the cytoplasm. The protein localises to the mitochondrion. It is found in the nucleus. Its subcellular location is the nucleoplasm. Functionally, involved in the regulation of apoptosis versus cell survival, and in the maintenance of viability but not of proliferation. Mediates its effects by interactions with a number of other regulators of apoptosis. The chain is Induced myeloid leukemia cell differentiation protein Mcl-1 homolog (Mcl1) from Rattus norvegicus (Rat).